The following is a 388-amino-acid chain: UTP--glucose-1-phosphate uridylyltransferase (388 aa).

Residue D118 coordinates Mg(2+).

This sequence belongs to the CugP-type UDP-glucose pyrophosphorylase family. Mg(2+) is required as a cofactor.

The catalysed reaction is alpha-D-glucose 1-phosphate + UTP + H(+) = UDP-alpha-D-glucose + diphosphate. In terms of biological role, catalyzes the formation of UDP-glucose, from UTP and glucose 1-phosphate. Is highly specific since it cannot use other NTPs such as dTTP, CTP, ATP, and GTP, and other sugar-1P such as GlcNAc-1P, Gal-1P, and Man-1P, as substrates. Has probably a central and essential role as the substrate supplier for galactolipid synthesis; galactolipids are major constituents of the photosynthetic thylakoid membrane and important for photosynthetic activity. The chain is UTP--glucose-1-phosphate uridylyltransferase from Synechocystis sp. (strain ATCC 27184 / PCC 6803 / Kazusa).